The sequence spans 76 residues: uncharacterized protein (76 aa).

The chain crosses the membrane as a helical span at residues 24–44 (GAIFLVCYPLYCVVCFVSVLC).

The protein localises to the membrane. This is an uncharacterized protein from Schizosaccharomyces pombe (strain 972 / ATCC 24843) (Fission yeast).